The sequence spans 283 residues: Phosphatidylglycerol--prolipoprotein diacylglyceryl transferase (283 aa).

4 helical membrane passes run 20-40 (LGPV…FVAM), 51-71 (GGNP…GIIG), 97-117 (ITNG…AVYF), and 123-143 (GVAF…AQAI). Arginine 145 is a binding site for a 1,2-diacyl-sn-glycero-3-phospho-(1'-sn-glycerol). A run of 2 helical transmembrane segments spans residues 192–212 (VHPT…VLLW) and 255–275 (INVI…FALR).

This sequence belongs to the Lgt family.

It localises to the cell membrane. The enzyme catalyses L-cysteinyl-[prolipoprotein] + a 1,2-diacyl-sn-glycero-3-phospho-(1'-sn-glycerol) = an S-1,2-diacyl-sn-glyceryl-L-cysteinyl-[prolipoprotein] + sn-glycerol 1-phosphate + H(+). It participates in protein modification; lipoprotein biosynthesis (diacylglyceryl transfer). Catalyzes the transfer of the diacylglyceryl group from phosphatidylglycerol to the sulfhydryl group of the N-terminal cysteine of a prolipoprotein, the first step in the formation of mature lipoproteins. The sequence is that of Phosphatidylglycerol--prolipoprotein diacylglyceryl transferase from Corynebacterium diphtheriae (strain ATCC 700971 / NCTC 13129 / Biotype gravis).